Here is a 159-residue protein sequence, read N- to C-terminus: Protein SPA, chloroplastic (159 aa).

The transit peptide at 1-47 (MLTAPSLSRFKSPFISSPLKLPTLSSSFFTQKFHQTCRRRNSYPCIK) directs the protein to the chloroplast. Residues 56-76 (VIAITVGVLSVAIGVGIPVFY) traverse the membrane as a helical segment. The CR-type-like stretch occupies residues 85 to 145 (KRENTQPCFP…TCTTCQGSGI (61 aa)). CXXCXGXG motif repeat units lie at residues 92 to 99 (CFPCTGTG), 103 to 110 (CRFCMGTG), 126 to 133 (CINCDGAG), and 137 to 144 (CTTCQGSG).

As to expression, expressed in source leaves. Lower levels of expression in fruits and stems.

It localises to the plastid. The protein resides in the chloroplast thylakoid membrane. Functionally, participates in determining harvest index (HI) by affecting source-sink carbon distribution. Up-regulates the conversion of fixed carbon to exportable sugars. This chain is Protein SPA, chloroplastic, found in Solanum lycopersicum (Tomato).